Consider the following 114-residue polypeptide: Amphinase-4 (114 aa).

H15 acts as the Proton acceptor in catalysis. 4 disulfides stabilise this stretch: C26/C79, C41/C85, C59/C100, and C97/C114. An N-linked (GlcNAc...) asparagine glycan is attached at N27. 42–46 (KPVNT) is a binding site for substrate. N-linked (GlcNAc...) asparagine glycans are attached at residues N67 and N91. Residue H107 is the Proton donor of the active site.

Belongs to the pancreatic ribonuclease family. As to quaternary structure, monomer. Post-translationally, there are at least five different forms arising from glycan heterogeneity.

Its subcellular location is the secreted. In terms of biological role, endonuclease, hydrolyzes highly polymerized RNA, poly(U) and poly(C), and the dinucleotides CpA and UpA. Hydrolyzes rCA, rUA and rUG. Has cytotoxic activity against cultured human submaxillary gland carcinoma cells. In Lithobates pipiens (Northern leopard frog), this protein is Amphinase-4.